The following is a 284-amino-acid chain: MKRLPAVAGSFYESDPKKLKMQIEWSFRHNIGPRDIPKQTYEKKKRDNLFFVVPHAGYIYSGPVAAHSYYYLVSEGRPDVVIILGPNHTGLGSYVSAWPKGEWETPLGSVKIDEEILMQLVKESEVIDLDEKSHLYEHSIEVQLPFLQYFFDDDFKIVPIVIMMQTLEIAEFLADAIYNVMQKNPDKDIVVLASSDMNHYDPHEITVKKDVEAIEKIQQLDYKGLYEVVEGKDVTLCGYGPIMVNLILAKKFGKKAYILKHATSGDTSGPKDSVVGYLAARFGS.

Belongs to the MEMO1 family.

The protein is MEMO1 family protein LS215_2219 of Saccharolobus islandicus (strain L.S.2.15 / Lassen #1) (Sulfolobus islandicus).